The primary structure comprises 258 residues: Regulatory protein RecX (258 aa).

It belongs to the RecX family.

It is found in the cytoplasm. Modulates RecA activity. This is Regulatory protein RecX from Streptococcus pyogenes serotype M3 (strain ATCC BAA-595 / MGAS315).